Consider the following 272-residue polypeptide: 3-methyl-2-oxobutanoate hydroxymethyltransferase (272 aa).

Mg(2+) is bound by residues aspartate 52 and aspartate 91. 3-methyl-2-oxobutanoate-binding positions include 52-53 (DS), aspartate 91, and lysine 121. Residue glutamate 123 participates in Mg(2+) binding. Glutamate 190 serves as the catalytic Proton acceptor.

Belongs to the PanB family. Homodecamer; pentamer of dimers. Mg(2+) serves as cofactor.

It is found in the cytoplasm. The catalysed reaction is 3-methyl-2-oxobutanoate + (6R)-5,10-methylene-5,6,7,8-tetrahydrofolate + H2O = 2-dehydropantoate + (6S)-5,6,7,8-tetrahydrofolate. It functions in the pathway cofactor biosynthesis; (R)-pantothenate biosynthesis; (R)-pantoate from 3-methyl-2-oxobutanoate: step 1/2. Its function is as follows. Catalyzes the reversible reaction in which hydroxymethyl group from 5,10-methylenetetrahydrofolate is transferred onto alpha-ketoisovalerate to form ketopantoate. This chain is 3-methyl-2-oxobutanoate hydroxymethyltransferase, found in Christiangramia forsetii (strain DSM 17595 / CGMCC 1.15422 / KT0803) (Gramella forsetii).